The primary structure comprises 1247 residues: Nitric oxide synthase (1247 aa).

Residues 13 to 33 (EVAEGRESSKANHIGEERRGY) form a disordered region. Ser146 contacts (6R)-L-erythro-5,6,7,8-tetrahydrobiopterin. Cys224 is a heme b binding site. Gln287, Trp396, Tyr397, Glu401, and Asn406 together coordinate L-arginine. Trp487 and Phe500 together coordinate (6R)-L-erythro-5,6,7,8-tetrahydrobiopterin. Heme b is bound at residue Tyr515. Residues 537–557 (PRRKFNFKQIARAVKFTSKLF) are calmodulin-binding. In terms of domain architecture, Flavodoxin-like spans 567–766 (ATVLYATETG…AFRKWAPEVF (200 aa)). Residue 712–743 (VFALGSSAYPNFCAFGKYIDNILGELGGERLM) participates in FMN binding. Residues 795–1065 (NTVRYAPVAE…VRSAPSFHMS (271 aa)) enclose the FAD-binding FR-type domain. FAD-binding positions include 855 to 866 (YEPGDHVGIFPA) and 998 to 1008 (LQPRFYSISSS). NADP(+)-binding positions include 1073 to 1091 (ILIGPGTGIAPFRSFWQEW) and 1170 to 1185 (KGHIYVCGDVTMAEHV).

Belongs to the NOS family. It depends on heme b as a cofactor. The cofactor is FAD. Requires FMN as cofactor.

The catalysed reaction is 2 L-arginine + 3 NADPH + 4 O2 + H(+) = 2 L-citrulline + 2 nitric oxide + 3 NADP(+) + 4 H2O. Stimulated by calcium/calmodulin. Functionally, produces nitric oxide (NO) which is a messenger molecule with diverse functions throughout the body. Nitric oxide limits plasmodium development in the midgut. The protein is Nitric oxide synthase of Anopheles stephensi (Indo-Pakistan malaria mosquito).